The following is a 90-amino-acid chain: Small ribosomal subunit protein uS15 (90 aa).

The protein belongs to the universal ribosomal protein uS15 family. Part of the 30S ribosomal subunit. Forms a bridge to the 50S subunit in the 70S ribosome, contacting the 23S rRNA.

In terms of biological role, one of the primary rRNA binding proteins, it binds directly to 16S rRNA where it helps nucleate assembly of the platform of the 30S subunit by binding and bridging several RNA helices of the 16S rRNA. Its function is as follows. Forms an intersubunit bridge (bridge B4) with the 23S rRNA of the 50S subunit in the ribosome. The chain is Small ribosomal subunit protein uS15 from Helicobacter pylori (strain J99 / ATCC 700824) (Campylobacter pylori J99).